A 62-amino-acid polypeptide reads, in one-letter code: Sperm protamine P1 (62 aa).

The interval 1–62 (MARYRHSRSR…RYSRRRRRRY (62 aa)) is disordered.

This sequence belongs to the protamine P1 family. In terms of tissue distribution, testis.

The protein resides in the nucleus. The protein localises to the chromosome. In terms of biological role, protamines substitute for histones in the chromatin of sperm during the haploid phase of spermatogenesis. They compact sperm DNA into a highly condensed, stable and inactive complex. This Lagostrophus fasciatus (Banded hare-wallaby) protein is Sperm protamine P1 (PRM1).